The primary structure comprises 476 residues: Transcription factor EB (476 aa).

2 disordered regions span residues 1–66 (MASR…PPVP) and 107–142 (HISPAQGSPKPPPAASPGVRAGHVLSSSAGNSAPNS). Positions 1 to 167 (MASRIGLRMQ…DDVIDNIMRL (167 aa)) are interaction with ACSS2. A compositionally biased stretch (low complexity) spans 26–44 (QQQAVMHYMQQQQQQQQQQ). Ser109, Ser114, Ser122, and Ser138 each carry phosphoserine. Over residues 132–142 (SSSAGNSAPNS) the composition is skewed to low complexity. Positions 136–153 (GNSAPNSPMAMLHIGSNP) match the Nuclear export signal motif. Phosphoserine; by MTOR is present on Ser142. The segment at 156-165 (ELDDVIDNIM) is strong transcription activation domain. Thr183 is subject to Phosphothreonine. Ser211 carries the post-translational modification Phosphoserine; by MTOR. Cys212 is subject to S-(2,3-dicarboxypropyl)cysteine. Residues 235–288 (QKKDNHNLIERRRRFNINDRIKELGMLIPKANDLDVRWNKGTILKASVDYIRRM) enclose the bHLH domain. Residues 245 to 248 (RRRR) carry the Nuclear localization signal motif. The leucine-zipper stretch occupies residues 298 to 319 (LENHSRRLEMTNKQLWLRIQEL). A Phosphoserine modification is found at Ser332. The tract at residues 349-430 (ELPSEEGPGE…HGSPFPSLSK (82 aa)) is disordered. Positions 369-390 (PEPLPALPPQAPLPLPTQPPSP) are enriched in pro residues. Residues Ser423, Ser441, Ser466, Ser467, and Ser469 each carry the phosphoserine modification. Residues 447–469 (SDPLLSTMSPEASKASSRRSSFS) are compositionally biased toward low complexity. Residues 447–476 (SDPLLSTMSPEASKASSRRSSFSMEEGDVL) are disordered.

It belongs to the MiT/TFE family. Homodimer and heterodimer; with TFE3 or MITF. Interacts (when phosphorylated by MTOR) with YWHAZ; promoting retention in the cytosol. Interacts with IRGM; promoting association between TFEB and PPP3CB and dephosphorylation. Interacts with small GTPases Rag (RagA/RRAGA, RagB/RRAGB, RagC/RRAGC and/or RagD/RRAGD); promoting its recruitment to lysosomal membrane in the presence of nutrients. Interacts with ACSS2. In terms of processing, phosphorylation at Ser-211 by MTOR via non-canonical mTORC1 pathway regulates its subcellular location and activity. When nutrients are present, phosphorylation by MTOR promotes association with 14-3-3/YWHA adapters and retention in the cytosol. Inhibition of mTORC1, starvation and lysosomal disruption, promotes dephosphorylation by calcineurin PPP3CB and translocation to the nucleus. Dephosphorylated by calcineurin PPP3CB in response to lysosomal Ca(2+) release. IRGM promotes dephosphorylation by calcineurin PPP3CB, resulting in TFEB nuclear translocation and stimulation of lysosomal biogenesis. Dephosphorylated by phosphatase PPP3CA following Coxsackievirus B3 infection, leading to nuclear translocation. Exported from the nucleus in a mTORC1-dependent manner in response to nutrient availability. Post-translationally, alkylated via a non-enzymatic covalent modification. Itaconate, an anti-inflammatory metabolite generated in response to lipopolysaccharide, alkylates Cys-212, preventing association with 14-3-3/YWHA adapters, thereby promoting nuclear translocation and activity. Sumoylated; does not affect dimerization with MITF. In terms of processing, (Microbial infection) Cleavage by Coxsackievirus B3 protease 3C after site Gln-60. This non-phosphorylated cleavage product retains its ability to interact with TFEB, TFE3 or MITF and presents impaired transcriptional activity, resulting in disruption of lysosomal functions and increased viral infection.

The protein resides in the nucleus. It is found in the cytoplasm. The protein localises to the cytosol. It localises to the lysosome membrane. Inhibited by eltrombopag drug, which binds to the bHLH domain and disrupts DNA-binding. Its function is as follows. Transcription factor that acts as a master regulator of lysosomal biogenesis, autophagy, lysosomal exocytosis, lipid catabolism, energy metabolism and immune response. Specifically recognizes and binds E-box sequences (5'-CANNTG-3'); efficient DNA-binding requires dimerization with itself or with another MiT/TFE family member such as TFE3 or MITF. Involved in the cellular response to amino acid availability by acting downstream of MTOR: in the presence of nutrients, TFEB phosphorylation by MTOR promotes its cytosolic retention and subsequent inactivation. Upon starvation or lysosomal stress, inhibition of MTOR induces TFEB dephosphorylation, resulting in nuclear localization and transcription factor activity. Specifically recognizes and binds the CLEAR-box sequence (5'-GTCACGTGAC-3') present in the regulatory region of many lysosomal genes, leading to activate their expression, thereby playing a central role in expression of lysosomal genes. Regulates lysosomal positioning in response to nutrient deprivation by promoting the expression of PIP4P1. Acts as a positive regulator of autophagy by promoting expression of genes involved in autophagy. In association with TFE3, activates the expression of CD40L in T-cells, thereby playing a role in T-cell-dependent antibody responses in activated CD4(+) T-cells and thymus-dependent humoral immunity. Specifically recognizes the gamma-E3 box, a subset of E-boxes, present in the heavy-chain immunoglobulin enhancer. Plays a role in the signal transduction processes required for normal vascularization of the placenta. Involved in the immune response to infection by the bacteria S.aureus, S.typhimurium or S.enterica: infection promotes itaconate production, leading to alkylation, resulting in nuclear localization and transcription factor activity. Itaconate-mediated alkylation activates TFEB-dependent lysosomal biogenesis, facilitating the bacteria clearance during the antibacterial innate immune response. In association with ACSS2, promotes the expression of genes involved in lysosome biogenesis and both autophagy upon glucose deprivation. This chain is Transcription factor EB, found in Homo sapiens (Human).